Here is a 122-residue protein sequence, read N- to C-terminus: Small ribosomal subunit protein uS13c (122 aa).

The protein belongs to the universal ribosomal protein uS13 family. In terms of assembly, part of the 30S ribosomal subunit.

It localises to the plastid. The protein localises to the chloroplast. In terms of biological role, located at the top of the head of the 30S subunit, it contacts several helices of the 16S rRNA. The chain is Small ribosomal subunit protein uS13c from Cyanidium caldarium (Red alga).